The primary structure comprises 303 residues: Mitochondrial carrier homolog 2 (303 aa).

Ala2 bears the N-acetylalanine mark. Over Ala2–Thr15 the chain is Mitochondrial intermembrane. 2 Solcar repeats span residues Ala2–Cys98 and Asp118–Tyr206. The chain crosses the membrane as a helical span at residues Ile16–Ala36. The Cytoplasmic segment spans residues Pro37–Arg77. Residues Leu78–Leu92 traverse the membrane as a helical segment. The Mitochondrial intermembrane portion of the chain corresponds to Gln93–Thr135. A helical membrane pass occupies residues Leu136–Glu156. At Ser157–Ala180 the chain is on the cytoplasmic side. Residues Gly181–Leu199 form a helical membrane-spanning segment. Residues Ala200–Ser231 lie on the Mitochondrial intermembrane side of the membrane. A helical membrane pass occupies residues Met232 to Ala252. At Gly253 to Arg280 the chain is on the cytoplasmic side. Residues Gly281–Ile303 traverse the membrane as a helical segment.

It belongs to the mitochondrial carrier (TC 2.A.29) family. Interacts with p15BID.

Its subcellular location is the mitochondrion outer membrane. In terms of biological role, protein insertase that mediates insertion of transmembrane proteins into the mitochondrial outer membrane. Catalyzes insertion of proteins with alpha-helical transmembrane regions, such as signal-anchored, tail-anchored and multi-pass membrane proteins. Does not mediate insertion of beta-barrel transmembrane proteins. Also acts as a receptor for the truncated form of pro-apoptotic BH3-interacting domain death agonist (p15 BID) and has therefore a critical function in apoptosis. Regulates the quiescence/cycling of hematopoietic stem cells (HSCs). Acts as a regulator of mitochondrial fusion, essential for the naive-to-primed interconversion of embryonic stem cells (ESCs). Acts as a regulator of lipid homeostasis and has a regulatory role in adipocyte differentiation and biology. In Bos taurus (Bovine), this protein is Mitochondrial carrier homolog 2 (MTCH2).